The primary structure comprises 197 residues: MSARVDIPADTSAAAKGTAPLIAASTHVKGGYKKGLAIFDLVLRLGAVVTALAAAATMGTTDQTLPFFTQFFQFQASYDDLPTFQFFVIAMAIVSGYLVLSLPFSIVAIIRPHATGPRLLLIILDTVALTLNTAAAAAAVAIVDLAQNGNSSANWLGICQQFGDFCQKASGAVVASFIAAGVLLFLIVISALALRKR.

Topologically, residues 1–35 (MSARVDIPADTSAAAKGTAPLIAASTHVKGGYKKG) are cytoplasmic. Residues 36–56 (LAIFDLVLRLGAVVTALAAAA) form a helical membrane-spanning segment. Residues 57–85 (TMGTTDQTLPFFTQFFQFQASYDDLPTFQ) are Extracellular-facing. Residues 86–106 (FFVIAMAIVSGYLVLSLPFSI) traverse the membrane as a helical segment. The Cytoplasmic portion of the chain corresponds to 107–119 (VAIIRPHATGPRL). Residues 120-140 (LLIILDTVALTLNTAAAAAAV) form a helical membrane-spanning segment. The Extracellular portion of the chain corresponds to 141–171 (AIVDLAQNGNSSANWLGICQQFGDFCQKASG). Asn150 carries an N-linked (GlcNAc...) asparagine glycan. The chain crosses the membrane as a helical span at residues 172–192 (AVVASFIAAGVLLFLIVISAL). At 193–197 (ALRKR) the chain is on the cytoplasmic side.

Belongs to the Casparian strip membrane proteins (CASP) family. In terms of assembly, homodimer and heterodimers.

The protein resides in the cell membrane. In terms of biological role, regulates membrane-cell wall junctions and localized cell wall deposition. Required for establishment of the Casparian strip membrane domain (CSD) and the subsequent formation of Casparian strips, a cell wall modification of the root endodermis that determines an apoplastic barrier between the intraorganismal apoplasm and the extraorganismal apoplasm and prevents lateral diffusion. This chain is Casparian strip membrane protein 3, found in Populus trichocarpa (Western balsam poplar).